The following is a 455-amino-acid chain: 1,4-beta-D-glucan cellobiohydrolase C (455 aa).

The signal sequence occupies residues 1–19; that stretch reads MHYSASGLALAFLLPAIQA. The CBM1 domain occupies 20 to 55; that stretch reads QQTLYGQCGGSGWTGATSCVAGAACSTLNQWYAQCL. 2 disulfide bridges follow: C27–C44 and C38–C54. The tract at residues 59–92 is thr-rich linker; that stretch reads TTTSTTLTTTTSSVTTTSNPGSTTTTSSVTVTAT. Residues 66–86 form a disordered region; it reads TTTTSSVTTTSNPGSTTTTSS. Positions 93–450 are catalytic; that stretch reads ASGNPFSGYQ…QAYFVQLLQN (358 aa). The active site involves D185. Disulfide bonds link C186–C245 and C377–C424. The active-site Proton donor is the D231. Catalysis depends on D410, which acts as the Nucleophile.

Belongs to the glycosyl hydrolase 6 (cellulase B) family.

The protein resides in the secreted. It carries out the reaction Hydrolysis of (1-&gt;4)-beta-D-glucosidic linkages in cellulose and cellotetraose, releasing cellobiose from the non-reducing ends of the chains.. Its function is as follows. The biological conversion of cellulose to glucose generally requires three types of hydrolytic enzymes: (1) Endoglucanases which cut internal beta-1,4-glucosidic bonds; (2) Exocellobiohydrolases that cut the disaccharide cellobiose from the non-reducing end of the cellulose polymer chain; (3) Beta-1,4-glucosidases which hydrolyze the cellobiose and other short cello-oligosaccharides to glucose. Active against carboxymethylcellulose, beta-glucan and lichenan. The protein is 1,4-beta-D-glucan cellobiohydrolase C (cbhC) of Emericella nidulans (strain FGSC A4 / ATCC 38163 / CBS 112.46 / NRRL 194 / M139) (Aspergillus nidulans).